The sequence spans 213 residues: Large ribosomal subunit protein bL25 (213 aa).

The segment covering 191–207 (AEPTDAPTAPAAAPGAE) has biased composition (low complexity). The segment at 191 to 213 (AEPTDAPTAPAAAPGAEAPKDKA) is disordered.

This sequence belongs to the bacterial ribosomal protein bL25 family. CTC subfamily. Part of the 50S ribosomal subunit; part of the 5S rRNA/L5/L18/L25 subcomplex. Contacts the 5S rRNA. Binds to the 5S rRNA independently of L5 and L18.

In terms of biological role, this is one of the proteins that binds to the 5S RNA in the ribosome where it forms part of the central protuberance. In Polynucleobacter asymbioticus (strain DSM 18221 / CIP 109841 / QLW-P1DMWA-1) (Polynucleobacter necessarius subsp. asymbioticus), this protein is Large ribosomal subunit protein bL25.